A 217-amino-acid polypeptide reads, in one-letter code: Pyridoxine/pyridoxamine 5'-phosphate oxidase (217 aa).

FMN is bound by residues 66–71 (RMVLLK), 81–82 (FT), Arg87, Lys88, and Gln110. Lys71 contributes to the substrate binding site. Substrate contacts are provided by Tyr128, Arg132, and Ser136. FMN is bound by residues 145 to 146 (QS) and Trp190. 196-198 (RLH) provides a ligand contact to substrate. An FMN-binding site is contributed by Arg200.

Belongs to the pyridoxamine 5'-phosphate oxidase family. In terms of assembly, homodimer. FMN is required as a cofactor.

The catalysed reaction is pyridoxamine 5'-phosphate + O2 + H2O = pyridoxal 5'-phosphate + H2O2 + NH4(+). It catalyses the reaction pyridoxine 5'-phosphate + O2 = pyridoxal 5'-phosphate + H2O2. Its pathway is cofactor metabolism; pyridoxal 5'-phosphate salvage; pyridoxal 5'-phosphate from pyridoxamine 5'-phosphate: step 1/1. The protein operates within cofactor metabolism; pyridoxal 5'-phosphate salvage; pyridoxal 5'-phosphate from pyridoxine 5'-phosphate: step 1/1. Catalyzes the oxidation of either pyridoxine 5'-phosphate (PNP) or pyridoxamine 5'-phosphate (PMP) into pyridoxal 5'-phosphate (PLP). The protein is Pyridoxine/pyridoxamine 5'-phosphate oxidase of Psychromonas ingrahamii (strain DSM 17664 / CCUG 51855 / 37).